The chain runs to 358 residues: Chromatin modification-related protein EAF3 (358 aa).

The Tudor-knot domain occupies 8-84 (KCLCYHGPLL…DEWVGLDRIR (77 aa)). Residues 103 to 184 (ELKNNGGKKK…KATPVLNKRS (82 aa)) are disordered. The span at 132 to 168 (SRTSNSGSGTNTSASSTSASNPASSSSSGTTAAASSS) shows a compositional bias: low complexity. Positions 184 to 356 (SHPKIHIKVP…TSSQYEGVAL (173 aa)) constitute an MRG domain.

It belongs to the MRG family. In terms of assembly, component of the NuA4 histone acetyltransferase complex.

It localises to the nucleus. Involved in deacetylation of histones, chromatin assembly and chromosome segregation. May act as a transcriptional oscillator, directing histone deacetylases to specific chromosomal domains. Component of the NuA4 histone acetyltransferase complex which is involved in transcriptional activation of selected genes principally by acetylation of nucleosomal histone H4 and H2A. The NuA4 complex is also involved in DNA repair. This chain is Chromatin modification-related protein EAF3 (EAF3), found in Kluyveromyces lactis (strain ATCC 8585 / CBS 2359 / DSM 70799 / NBRC 1267 / NRRL Y-1140 / WM37) (Yeast).